A 136-amino-acid chain; its full sequence is Small ribosomal subunit protein uS19 (136 aa).

This sequence belongs to the universal ribosomal protein uS19 family.

In terms of biological role, protein S19 forms a complex with S13 that binds strongly to the 16S ribosomal RNA. The protein is Small ribosomal subunit protein uS19 of Methanocorpusculum labreanum (strain ATCC 43576 / DSM 4855 / Z).